The following is a 319-amino-acid chain: MAQHFDFEKPILELEQKIAELQEFSKEKDINLSPEISKLMRRLVRLRKEIYGNLEPWQKVQIARHMERPNFYDYAPLLFEDFMEFKGDRLFADDKAIVGGIAIFQGIPVTVVSHIKGRGTKENIQRNFGMPHPEGYRKALRLMDQAEKFHRPILTFIDTPGAACDLEAEERGQGEAIARCLQAMAGYSVPIICTVIGEGGSGGALALGVGNKVLLLENSFYSVIAPESCASILWKDPGKAKEAASALKFTAQDLLELGIADGIIKEPLGGAHRSVERTAEEMKKTIAEALAELRELPPDELRTMRYEKLMNYGEFEEKA.

Residues 35-292 form the CoA carboxyltransferase C-terminal domain; that stretch reads EISKLMRRLV…KKTIAEALAE (258 aa).

It belongs to the AccA family. As to quaternary structure, acetyl-CoA carboxylase is a heterohexamer composed of biotin carboxyl carrier protein (AccB), biotin carboxylase (AccC) and two subunits each of ACCase subunit alpha (AccA) and ACCase subunit beta (AccD).

The protein localises to the cytoplasm. It carries out the reaction N(6)-carboxybiotinyl-L-lysyl-[protein] + acetyl-CoA = N(6)-biotinyl-L-lysyl-[protein] + malonyl-CoA. Its pathway is lipid metabolism; malonyl-CoA biosynthesis; malonyl-CoA from acetyl-CoA: step 1/1. Component of the acetyl coenzyme A carboxylase (ACC) complex. First, biotin carboxylase catalyzes the carboxylation of biotin on its carrier protein (BCCP) and then the CO(2) group is transferred by the carboxyltransferase to acetyl-CoA to form malonyl-CoA. This is Acetyl-coenzyme A carboxylase carboxyl transferase subunit alpha from Desulfitobacterium hafniense (strain DSM 10664 / DCB-2).